The sequence spans 490 residues: Muscarinic acetylcholine receptor M4 (490 aa).

Residues 1-42 lie on the Extracellular side of the membrane; the sequence is MHNLSAQPWQAKMANLTYDNVTLSNRSEVAIQPPTNYKTVEL. N-linked (GlcNAc...) asparagine glycans are attached at residues Asn-3, Asn-15, Asn-20, and Asn-25. Residues 43–64 traverse the membrane as a helical segment; that stretch reads VFIATVTGSLSLVTVVGNILVM. The Cytoplasmic segment spans residues 65 to 78; it reads LSIKVNRQLQTVNN. The chain crosses the membrane as a helical span at residues 79 to 99; it reads YFLFSLACADLIIGVFSMNLY. At 100 to 116 the chain is on the extracellular side; sequence TVYIIKGYWPLGAVVCD. Cys-115 and Cys-195 are disulfide-bonded. A helical membrane pass occupies residues 117–138; the sequence is LWLALDYVVSNASVMNLLIISF. Topologically, residues 139–158 are cytoplasmic; that stretch reads DRYFCVTKPLTYPARRTTKM. The helical transmembrane segment at 159-181 threads the bilayer; it reads AGLMIAAAWILSFILWAPAILFW. Over 182-203 the chain is Extracellular; the sequence is QFIVGKRTVHERECYIQFLSNP. Residues 204-226 traverse the membrane as a helical segment; sequence AVTFGTAIAAFYLPVVIMTVLYI. Topologically, residues 227-412 are cytoplasmic; that stretch reads HISLASRSRV…AAREKKVTRT (186 aa). Positions 236–250 are enriched in basic residues; sequence VRRHKPESRKERKGK. Residues 236 to 343 form a disordered region; that stretch reads VRRHKPESRK…HPRVNPTSKW (108 aa). Residues 270-285 show a composition bias toward basic and acidic residues; sequence RAVEVKEEVRNGKVDD. Composition is skewed to polar residues over residues 287 to 296 and 304 to 314; these read PSAQTEATGQ and NESSTVSMTQT. Residues 413–433 traverse the membrane as a helical segment; it reads IFAILLAFILTWTPYNVMVLI. Topologically, residues 434–447 are extracellular; it reads NTFCETCVPETVWS. The chain crosses the membrane as a helical span at residues 448–467; it reads IGYWLCYVNSTINPACYALC. The Cytoplasmic segment spans residues 468-490; that stretch reads NATFKKTFKHLLMCQYRNIGTAR.

This sequence belongs to the G-protein coupled receptor 1 family. Muscarinic acetylcholine receptor subfamily. CHRM4 sub-subfamily. As to expression, expressed in heart and brain.

It is found in the cell membrane. The protein localises to the postsynaptic cell membrane. Its function is as follows. The muscarinic acetylcholine receptor mediates various cellular responses, including inhibition of adenylate cyclase, breakdown of phosphoinositides and modulation of potassium channels through the action of G proteins. Primary transducing effect is inhibition of adenylate cyclase. May couple to multiple functional responses in cell lines. This chain is Muscarinic acetylcholine receptor M4 (CHRM4), found in Gallus gallus (Chicken).